The chain runs to 340 residues: Probable protein phosphatase 2C 21 (340 aa).

The tract at residues 1–21 (MGASPSRPLEQSPSSSEGENH) is disordered. The PPM-type phosphatase domain occupies 24–305 (KYASYTTQGF…DNATAILVKF (282 aa)). 4 residues coordinate Mn(2+): D58, G59, D254, and D296. The interval 311 to 340 (DPDEVASARDEHQHNPEGGDEKLDINNDND) is disordered. Over residues 316–340 (ASARDEHQHNPEGGDEKLDINNDND) the composition is skewed to basic and acidic residues.

It belongs to the PP2C family. Mg(2+) is required as a cofactor. It depends on Mn(2+) as a cofactor.

It catalyses the reaction O-phospho-L-seryl-[protein] + H2O = L-seryl-[protein] + phosphate. It carries out the reaction O-phospho-L-threonyl-[protein] + H2O = L-threonyl-[protein] + phosphate. The polypeptide is Probable protein phosphatase 2C 21 (Oryza sativa subsp. japonica (Rice)).